The following is a 156-amino-acid chain: Perlucin-like protein (156 aa).

Positions 1-22 (MGKLTVVGILTLFIFYIVAASG) are cleaved as a signal peptide. 3 disulfides stabilise this stretch: Cys30-Cys41, Cys58-Cys156, and Cys131-Cys147. Residues 37–156 (YKTNCYFFSP…CNTDQMGYIC (120 aa)) form the C-type lectin domain.

Component of the organic matrix of calcified shell layers like nacre and prisms.

Its subcellular location is the secreted. This Mytilus galloprovincialis (Mediterranean mussel) protein is Perlucin-like protein.